A 52-amino-acid chain; its full sequence is uncharacterized protein (52 aa).

A helical membrane pass occupies residues 7-27; that stretch reads MFQLFVFIIFAAVVFAAVTGF.

The protein resides in the membrane. This is an uncharacterized protein from Bacillus subtilis (strain 168).